We begin with the raw amino-acid sequence, 85 residues long: Serine protease inhibitor Kazal-type 7 (85 aa).

An N-terminal signal peptide occupies residues 1-19 (MKITGGLLLLCTVVYFCSS). Positions 26 to 85 (SPKKVDCSIYKKYPVVAIPCPITYLPVCGSDYITYGNECHLCTESLKSNGRVQFLHDGSC) constitute a Kazal-like domain. Intrachain disulfides connect C32–C67, C45–C64, and C53–C85.

It is found in the secreted. Probable serine protease inhibitor. This is Serine protease inhibitor Kazal-type 7 (SPINK7) from Homo sapiens (Human).